The primary structure comprises 197 residues: Non-structural protein 5 (197 aa).

The segment at 16–36 (NIFKNESSSTTSTLSGKSIGR) is disordered. Position 67 is a phosphoserine; by host CK1 (Ser67). Residue Asp92 participates in Mg(2+) binding. The segment at 130 to 167 (TNHKKEKSKKDKSRKHYPRIEADSDSEDYVLDDSDSDD) is disordered. A compositionally biased stretch (basic residues) spans 131-146 (NHKKEKSKKDKSRKHY). Acidic residues predominate over residues 152 to 165 (DSDSEDYVLDDSDS). Phosphoserine; by host occurs at positions 153, 155, 163, and 165.

It belongs to the rotavirus NSP5 family. As to quaternary structure, homodimer. Interacts with VP1. Interacts with VP2. Interacts with NSP2; this interaction leads to up-regulation of NSP5 hyperphosphorylation and formation of virus factories. Interacts with NSP6. Participates in the selective exclusion of host proteins from stress granules (SG) and P bodies (PB). Also participates in the sequestration of these remodeled organelles in viral factories. The cofactor is Mg(2+). O-glycosylated. Post-translationally, hyperphosphorylated on serine residues, when in dimeric form. Phosphorylation by host CK1 is required for the hyperphosphorylation of NSP5 dimer.

It is found in the host cytoplasm. In terms of biological role, plays an essential role in the viral genome replication. Participates, together with NSP2, in the formation of viral factories (viroplasms), which are large inclusions in the host cytoplasm where replication intermediates are assembled and viral RNA replication takes place. Orchestrates the recruitment of viroplasmic proteins such as capsid proteins to these factories. Participates in the selective exclusion of host proteins from stress granules (SG) and P bodies (PB). Also participates in the sequestration of these remodeled organelles in viral factories. The chain is Non-structural protein 5 from Homo sapiens (Human).